The sequence spans 142 residues: Alpha-lactalbumin (142 aa).

An N-terminal signal peptide occupies residues 1-19 (MRFFVPLFLVGILFPAILA). Residues 20–142 (KQFTKCELSQ…KLEQWLCEKL (123 aa)) enclose the C-type lysozyme domain. Intrachain disulfides connect Cys-25/Cys-139, Cys-47/Cys-130, Cys-80/Cys-96, and Cys-92/Cys-110. Ca(2+)-binding residues include Thr-57 and Gln-58. N-linked (GlcNAc...) asparagine glycosylation occurs at Asn-64. Glu-68 is a Zn(2+) binding site. N-linked (GlcNAc...) asparagine; atypical; partial glycosylation occurs at Asn-90. Lys-98, Leu-100, Asp-101, Asp-102, Asp-103, Asp-106, and Asp-107 together coordinate Ca(2+). Position 135 (Glu-135) interacts with Zn(2+).

It belongs to the glycosyl hydrolase 22 family. Lactose synthase (LS) is a heterodimer of a catalytic component, beta1,4-galactosyltransferase (beta4Gal-T1) and a regulatory component, alpha-lactalbumin (LA). Mammary gland specific. Secreted in milk.

It is found in the secreted. In terms of biological role, regulatory subunit of lactose synthase, changes the substrate specificity of galactosyltransferase in the mammary gland making glucose a good acceptor substrate for this enzyme. This enables LS to synthesize lactose, the major carbohydrate component of milk. In other tissues, galactosyltransferase transfers galactose onto the N-acetylglucosamine of the oligosaccharide chains in glycoproteins. This Homo sapiens (Human) protein is Alpha-lactalbumin (LALBA).